Consider the following 370-residue polypeptide: ATP synthase gamma chain, chloroplastic (370 aa).

A chloroplast-targeting transit peptide spans 1–54; that stretch reads MRSFCIAALLAVASAFTTQPTSFTVKTANVGERASGVFPEQSSAHRTRKATIVM. Cys-145 is a catalytic residue.

It belongs to the ATPase gamma chain family. In terms of assembly, F-type ATPases have 2 components, CF(1) - the catalytic core - and CF(0) - the membrane proton channel. CF(1) has five subunits: alpha(3), beta(3), gamma(1), delta(1), epsilon(1). CF(0) has four main subunits: a, b, b' and c.

Its subcellular location is the plastid. It is found in the chloroplast thylakoid membrane. Its function is as follows. Produces ATP from ADP in the presence of a proton gradient across the membrane. The gamma chain is believed to be important in regulating ATPase activity and the flow of protons through the CF(0) complex. This is ATP synthase gamma chain, chloroplastic (ATPC) from Phaeodactylum tricornutum (Diatom).